The chain runs to 260 residues: ATP synthase subunit a (260 aa).

Transmembrane regions (helical) follow at residues 29–49, 95–115, 124–144, 151–171, 191–211, 213–233, and 237–257; these read FSFTNSSLFMLLTLSFFLLLI, FFPCILVTFLFLLFCNLQGMI, HFLITLALSFSIFIGITIVGF, FFSFLLPAGVPLPLAPFLVLL, MMAGHSLVKILSGFAWTMLCM, EIFYFIGALGPLFIVLALTGL, and VAILQAYVFTILICIYLNDAI.

It belongs to the ATPase A chain family. In terms of assembly, F-type ATPases have 2 components, CF(1) - the catalytic core - and CF(0) - the membrane proton channel. CF(1) has five subunits: alpha(3), beta(3), gamma(1), delta(1), epsilon(1). CF(0) has three main subunits: a, b and c.

The protein resides in the mitochondrion inner membrane. Functionally, mitochondrial membrane ATP synthase (F(1)F(0) ATP synthase or Complex V) produces ATP from ADP in the presence of a proton gradient across the membrane which is generated by electron transport complexes of the respiratory chain. F-type ATPases consist of two structural domains, F(1) - containing the extramembraneous catalytic core and F(0) - containing the membrane proton channel, linked together by a central stalk and a peripheral stalk. During catalysis, ATP synthesis in the catalytic domain of F(1) is coupled via a rotary mechanism of the central stalk subunits to proton translocation. Key component of the proton channel; it may play a direct role in the translocation of protons across the membrane. This chain is ATP synthase subunit a (ATP6), found in Brassica napus (Rape).